The following is a 171-amino-acid chain: NRR repressor homolog 2 (171 aa).

Residues 1–12 (MEARLSTGEKTK) show a composition bias toward basic and acidic residues. 3 disordered regions span residues 1–45 (MEAR…QQQM), 65–94 (AALP…APWR), and 119–143 (TTKG…EEDK). Acidic residues predominate over residues 26–43 (PEEETAAETTTSEEEEQQ).

Belongs to the NPR1-interactor family. In terms of assembly, interacts with NPR1/NH1. Interacts with NPR3/NH3.

The protein resides in the nucleus. In terms of biological role, binds to and weakly represses NPR1/NH1-mediated transcriptional activation of LG2 in vitro. In Oryza sativa subsp. japonica (Rice), this protein is NRR repressor homolog 2.